We begin with the raw amino-acid sequence, 102 residues long: Large ribosomal subunit protein uL24 (102 aa).

The disordered stretch occupies residues His44 to Ser65.

It belongs to the universal ribosomal protein uL24 family. In terms of assembly, part of the 50S ribosomal subunit.

Functionally, one of two assembly initiator proteins, it binds directly to the 5'-end of the 23S rRNA, where it nucleates assembly of the 50S subunit. In terms of biological role, one of the proteins that surrounds the polypeptide exit tunnel on the outside of the subunit. This chain is Large ribosomal subunit protein uL24, found in Shouchella clausii (strain KSM-K16) (Alkalihalobacillus clausii).